We begin with the raw amino-acid sequence, 189 residues long: ComE operon protein 2 (189 aa).

The 128-residue stretch at 5–132 folds into the CMP/dCMP-type deaminase domain; sequence SWNQYFMAQS…PYAQELFEQA (128 aa). Residue H70 participates in Zn(2+) binding. The active-site Proton donor is the E72. Zn(2+) contacts are provided by C98 and C101.

It belongs to the cytidine and deoxycytidylate deaminase family. Zn(2+) serves as cofactor.

Its function is as follows. Dispensable for transformability. In Bacillus subtilis (strain 168), this protein is ComE operon protein 2 (comEB).